A 464-amino-acid chain; its full sequence is Gamma-aminobutyric acid receptor subunit alpha-5 (464 aa).

Positions 1-25 (MDNGMLSRFIMTKTLLVFCISMTLS) are cleaved as a signal peptide. At 26-260 (SHFGFSQMPT…FHLKRKIGYF (235 aa)) the chain is on the extracellular side. Asn45 carries an N-linked (GlcNAc...) asparagine glycan. 4-aminobutanoate is bound at residue Arg101. Asn145 carries an N-linked (GlcNAc...) asparagine glycan. Position 164 (Thr164) interacts with 4-aminobutanoate. Cys173 and Cys187 are oxidised to a cystine. Asn207 and Asn236 each carry an N-linked (GlcNAc...) asparagine glycan. The next 3 membrane-spanning stretches (helical) occupy residues 261–281 (VIQTYLPCIMTVILSQVSFWL), 287–308 (PARTVFGVTTVLTMTTLSISAR), and 319–340 (AMDWFIAVCYAFVFSALIEFAT). The Cytoplasmic portion of the chain corresponds to 341–429 (VNYFTKRGWA…TYNSISKIDK (89 aa)). Lys355 is covalently cross-linked (Glycyl lysine isopeptide (Lys-Gly) (interchain with G-Cter in ubiquitin)). The tract at residues 382–414 (KLTHPPNIPKEQLPGGTGNAVGTASIRASEEKT) is disordered. A helical transmembrane segment spans residues 430 to 450 (MSRIVFPILFGTFNLVYWATY).

This sequence belongs to the ligand-gated ion channel (TC 1.A.9) family. Gamma-aminobutyric acid receptor (TC 1.A.9.5) subfamily. GABRA5 sub-subfamily. As to quaternary structure, heteropentamer, formed by a combination of alpha (GABRA1-6), beta (GABRB1-3), gamma (GABRG1-3), delta (GABRD), epsilon (GABRE), rho (GABRR1-3), pi (GABRP) and theta (GABRQ) chains, each subunit exhibiting distinct physiological and pharmacological properties. As to expression, expressed in brain areas such as cerebral cortex, hippocampal formation and olfactory bulb granular layer.

The protein resides in the postsynaptic cell membrane. The protein localises to the cell membrane. The enzyme catalyses chloride(in) = chloride(out). Its activity is regulated as follows. Allosterically potentiated by alphaxalone. Allosterically inhibited by pregnenolone sulfate. Inhibited by zinc and lanthanum. Functionally, alpha subunit of the heteropentameric ligand-gated chloride channel gated by gamma-aminobutyric acid (GABA), a major inhibitory neurotransmitter in the brain. GABA-gated chloride channels, also named GABA(A) receptors (GABAAR), consist of five subunits arranged around a central pore and contain GABA active binding site(s) located at the alpha and beta subunit interface(s). When activated by GABA, GABAARs selectively allow the flow of chloride anions across the cell membrane down their electrochemical gradient. GABAARs containing alpha-5/GABRA5 subunits are mainly extrasynaptic and contribute to the tonic GABAergic inhibition in the hippocampus. Extrasynaptic alpha-5-containing GABAARs in CA1 pyramidal neurons play a role in learning and memory processes. In Rattus norvegicus (Rat), this protein is Gamma-aminobutyric acid receptor subunit alpha-5.